Reading from the N-terminus, the 307-residue chain is Probable RuBisCO transcriptional regulator (307 aa).

One can recognise an HTH lysR-type domain in the interval 5–62 (FTLQQLRIFKAIASEKSFTQAAEILFVSQPSLSKQIKTLENRLGILLLNRTGNKILLT). The H-T-H motif DNA-binding region spans 22–41 (FTQAAEILFVSQPSLSKQIK).

This sequence belongs to the LysR transcriptional regulatory family.

It localises to the plastid. Its subcellular location is the chloroplast. Its function is as follows. Trans-acting transcriptional regulator of RuBisCO genes (rbcL and rbcS) expression. The sequence is that of Probable RuBisCO transcriptional regulator (rbcR-A) from Thalassiosira pseudonana (Marine diatom).